A 396-amino-acid polypeptide reads, in one-letter code: Probable sugar efflux transporter (396 aa).

The next 12 helical transmembrane spans lie at 15 to 35, 50 to 70, 81 to 101, 103 to 123, 136 to 156, 169 to 189, 209 to 229, 246 to 266, 275 to 295, 301 to 321, 333 to 353, and 364 to 384; these read VVTL…PVGL, VGIM…PFML, LICL…AWNF, VLVI…SITA, AQAL…GLPI, TFFA…KLLP, PALM…YTAY, FATV…LVFG, SLVS…LPAA, LAIL…GMQV, VAMA…ALVG, and AIGY…VLIF.

It belongs to the major facilitator superfamily. SotB (TC 2.A.1.2) family.

It localises to the cell inner membrane. Involved in the efflux of sugars. The physiological role may be the reduction of the intracellular concentration of toxic sugars or sugar metabolites. This is Probable sugar efflux transporter from Salmonella paratyphi C (strain RKS4594).